A 430-amino-acid chain; its full sequence is Serine--tRNA ligase (430 aa).

L-serine is bound at residue 231-233; the sequence is TSE. Residue 262–264 participates in ATP binding; that stretch reads RSE. Glutamate 285 is a binding site for L-serine. 349–352 serves as a coordination point for ATP; it reads EISS. Serine 385 is an L-serine binding site.

Belongs to the class-II aminoacyl-tRNA synthetase family. Type-1 seryl-tRNA synthetase subfamily. As to quaternary structure, homodimer. The tRNA molecule binds across the dimer.

Its subcellular location is the cytoplasm. It catalyses the reaction tRNA(Ser) + L-serine + ATP = L-seryl-tRNA(Ser) + AMP + diphosphate + H(+). The enzyme catalyses tRNA(Sec) + L-serine + ATP = L-seryl-tRNA(Sec) + AMP + diphosphate + H(+). Its pathway is aminoacyl-tRNA biosynthesis; selenocysteinyl-tRNA(Sec) biosynthesis; L-seryl-tRNA(Sec) from L-serine and tRNA(Sec): step 1/1. Functionally, catalyzes the attachment of serine to tRNA(Ser). Is also able to aminoacylate tRNA(Sec) with serine, to form the misacylated tRNA L-seryl-tRNA(Sec), which will be further converted into selenocysteinyl-tRNA(Sec). This Jannaschia sp. (strain CCS1) protein is Serine--tRNA ligase.